The chain runs to 831 residues: Leucine--tRNA ligase (831 aa).

The 'HIGH' region motif lies at 36–46; the sequence is PYPSGKLHIGH. The short motif at 607–611 is the 'KMSKS' region element; sequence KMSKS. K610 is a binding site for ATP.

It belongs to the class-I aminoacyl-tRNA synthetase family.

Its subcellular location is the cytoplasm. It carries out the reaction tRNA(Leu) + L-leucine + ATP = L-leucyl-tRNA(Leu) + AMP + diphosphate. This Neorickettsia sennetsu (strain ATCC VR-367 / Miyayama) (Ehrlichia sennetsu) protein is Leucine--tRNA ligase.